Consider the following 393-residue polypeptide: MSLSLKRKDLMIVNMGPQHPSMHGVLRLIVTLDGEDVIDCEPILGYLHRGMEKIAENRSIIQYLPYVTRWDYLATMFTEAITVNAPEFLENIQIPQRASYIRVIMLELSRIASHLLWLGPFMADLGAQTPFFYIFRERELIYDLFEAATGMRMMHNYFRIGGVAADLPYGWMDKCLDFCDYFLQGVVEYQQLITQNPIFLERVEGVGFISGEEAVNWGLSGPMLRASGIQWDLRKIDPYESYNQFDWKVQWQKEGDSLARYLVRVGEMRESIKIIQQAVEKIPGGPYENLEARRFKKAKNPEWNDFEYRFLGKKPSPNFELSKQELYVRVEAPKGELGIYLVGDDSLFPWRWKIRPPGFINLQILPQLVKKMKLADIMTILGSIDIIMGEVDR.

Belongs to the complex I 49 kDa subunit family. As to quaternary structure, NDH is composed of at least 16 different subunits, 5 of which are encoded in the nucleus.

It localises to the plastid. The protein localises to the chloroplast thylakoid membrane. The enzyme catalyses a plastoquinone + NADH + (n+1) H(+)(in) = a plastoquinol + NAD(+) + n H(+)(out). The catalysed reaction is a plastoquinone + NADPH + (n+1) H(+)(in) = a plastoquinol + NADP(+) + n H(+)(out). Functionally, NDH shuttles electrons from NAD(P)H:plastoquinone, via FMN and iron-sulfur (Fe-S) centers, to quinones in the photosynthetic chain and possibly in a chloroplast respiratory chain. The immediate electron acceptor for the enzyme in this species is believed to be plastoquinone. Couples the redox reaction to proton translocation, and thus conserves the redox energy in a proton gradient. This chain is NAD(P)H-quinone oxidoreductase subunit H, chloroplastic, found in Saccharum hybrid (Sugarcane).